A 535-amino-acid polypeptide reads, in one-letter code: Dual specificity calcium/calmodulin-dependent 3',5'-cyclic nucleotide phosphodiesterase 1B (535 aa).

Residues 1 to 21 (MELSPRSPPEMLESDCPSPLE) form a disordered region. Residues S7 and S14 each carry the phosphoserine modification. Calmodulin-binding regions lie at residues 26–46 (PSKKMWIKLRSLLRYMVKQLE) and 117–140 (EKPKFRSIVHAVQAGIFVERMFRR). Residues 145 to 502 (VGPTYSTAVH…QKWKERAASG (358 aa)) form the PDEase domain. H222 serves as the catalytic Proton donor. Positions 226, 262, 263, and 369 each coordinate Zn(2+). D263 provides a ligand contact to Mg(2+). 2 disordered regions span residues 445–474 (PLADDDSKSKSQPSFQWRQPSLDVDVGDPN) and 495–535 (WKER…GNLD). Over residues 454-463 (KSQPSFQWRQ) the composition is skewed to polar residues. Phosphoserine occurs at positions 465 and 513.

Belongs to the cyclic nucleotide phosphodiesterase family. PDE1 subfamily. As to quaternary structure, homodimer. Requires Zn(2+) as cofactor. Mg(2+) is required as a cofactor.

It localises to the cytoplasm. The protein localises to the cytosol. The catalysed reaction is a nucleoside 3',5'-cyclic phosphate + H2O = a nucleoside 5'-phosphate + H(+). It carries out the reaction 3',5'-cyclic GMP + H2O = GMP + H(+). The enzyme catalyses 3',5'-cyclic AMP + H2O = AMP + H(+). Its activity is regulated as follows. Type I PDE are activated by the binding of calmodulin in the presence of Ca(2+). Functionally, cyclic nucleotide phosphodiesterase with a dual specificity for the second messengers cAMP and cGMP, which are key regulators of many important physiological processes. Has a preference for cGMP as a substrate. This is Dual specificity calcium/calmodulin-dependent 3',5'-cyclic nucleotide phosphodiesterase 1B from Cricetulus griseus (Chinese hamster).